A 555-amino-acid polypeptide reads, in one-letter code: MRGAILATAAAFAGTAVADMHMRRHAHEGLHHRALHASSAVPEEECGCTTEVITYWGEPTTIPLSVPTSTVTSETTETVHSTSYSTVTVTATSSAAPVETPSETPSPTPEVTLPTAGVTSYSETGTYTIPATTITVTDTTTVCGATTTELPSGTHTYGGVTTIVETATTITCPYATVKPTGSTVTSVIETTTYVCPSAGTYTIAPTTTFVPTSTVVVYPTPETVTPGTYTNPGTTITVTRTEDVYVCPYTNGNVPTSVPALPTTSAASTTTAVPSSSTTTSSATSVPTGASGNKMGMTFTPYNNDGSCMAKNDVLEQVGLIKGKGFSHVRVYGTDCHTLEYVGAACSTHGLKMILGVNVEGSTGFDGARSQFKDITNWGQWDLVSLIVVGNEVVTSNIASAAQLASFVSEGASAFSAAGYTGQVTTAEPIDVWLSNGATLCPVVDILGANLHPFFNPEFTAAEAGTLVSNQIKDLKQVCTGKDVINLETGWPNAGSANGKAIPGQSQQTTAIKSLVEKVGDVSVFFSYADDGWKSKFATSDKYNVEQHWGCIDQF.

An N-terminal signal peptide occupies residues 1-18 (MRGAILATAAAFAGTAVA). Disordered stretches follow at residues 92-114 (TSSA…VTLP) and 263-290 (TTSA…PTGA). Low complexity predominate over residues 263–288 (TTSAASTTTAVPSSSTTTSSATSVPT). Residue glutamate 392 is the Proton donor of the active site. Glutamate 488 functions as the Nucleophile in the catalytic mechanism.

It belongs to the glycosyl hydrolase 17 family.

It localises to the secreted. The protein resides in the cell wall. The catalysed reaction is Hydrolysis of terminal, non-reducing beta-D-glucosyl residues with release of beta-D-glucose.. The protein operates within glycan metabolism; cellulose degradation. Functionally, beta-glucosidases are one of a number of cellulolytic enzymes involved in the degradation of cellulosic biomass. Catalyzes the last step releasing glucose from the inhibitory cellobiose. The chain is Probable beta-glucosidase btgE (btgE) from Emericella nidulans (strain FGSC A4 / ATCC 38163 / CBS 112.46 / NRRL 194 / M139) (Aspergillus nidulans).